Reading from the N-terminus, the 207-residue chain is Reticulon-1-A (207 aa).

The region spanning 21–207 is the Reticulon domain; the sequence is AIDLLYWRDI…AKIPGTKQKE (187 aa). 2 consecutive transmembrane segments (helical) span residues 35–55 and 139–159; these read IVFGSVLLMLFSLIQFSVVSV and VLMWLLTYVGALFNGLTLLIM.

Expressed in the animal hemisphere (presumptive neural ectoderm) of blastula and gastrula stage embryos, and along the anterior neural border, in the panplacodal primordium, and in the dorsolateral side of archenteron roof of late neurula embryos. At the tailbud stage, expression localizes to the central nervous system, including the spinal cord, prosencephalon, mesencephalon and rhombencephalon, as well as the lateral line placode, otic vesicle and pronephros.

It is found in the endoplasmic reticulum membrane. The protein localises to the nucleus. Functionally, inhibits amyloid precursor protein processing, probably by blocking BACE1 activity. This is Reticulon-1-A (rtn1-a) from Xenopus laevis (African clawed frog).